A 488-amino-acid chain; its full sequence is Protein nucleotidyltransferase YdiU (488 aa).

ATP is bound by residues glycine 91, glycine 93, arginine 94, lysine 114, aspartate 126, glycine 127, arginine 177, and arginine 184. The active-site Proton acceptor is aspartate 253. Mg(2+) is bound by residues asparagine 254 and aspartate 263. An ATP-binding site is contributed by aspartate 263.

The protein belongs to the SELO family. It depends on Mg(2+) as a cofactor. Requires Mn(2+) as cofactor.

The enzyme catalyses L-seryl-[protein] + ATP = 3-O-(5'-adenylyl)-L-seryl-[protein] + diphosphate. It carries out the reaction L-threonyl-[protein] + ATP = 3-O-(5'-adenylyl)-L-threonyl-[protein] + diphosphate. It catalyses the reaction L-tyrosyl-[protein] + ATP = O-(5'-adenylyl)-L-tyrosyl-[protein] + diphosphate. The catalysed reaction is L-histidyl-[protein] + UTP = N(tele)-(5'-uridylyl)-L-histidyl-[protein] + diphosphate. The enzyme catalyses L-seryl-[protein] + UTP = O-(5'-uridylyl)-L-seryl-[protein] + diphosphate. It carries out the reaction L-tyrosyl-[protein] + UTP = O-(5'-uridylyl)-L-tyrosyl-[protein] + diphosphate. In terms of biological role, nucleotidyltransferase involved in the post-translational modification of proteins. It can catalyze the addition of adenosine monophosphate (AMP) or uridine monophosphate (UMP) to a protein, resulting in modifications known as AMPylation and UMPylation. In Bacillus cereus (strain ATCC 14579 / DSM 31 / CCUG 7414 / JCM 2152 / NBRC 15305 / NCIMB 9373 / NCTC 2599 / NRRL B-3711), this protein is Protein nucleotidyltransferase YdiU.